The primary structure comprises 117 residues: Big defensin (117 aa).

Residues 1 to 23 form the signal peptide; it reads MEKKTAYCLLFLVLLVPYTALGA. The propeptide occupies 24–33; sequence VLKRAPAKKE. 3 disulfides stabilise this stretch: Cys82/Cys112, Cys89/Cys107, and Cys93/Cys113.

The protein belongs to the big defensin family.

The protein localises to the secreted. Functionally, significantly inhibits the growth of Gram-negative and Gram-positive bacteria and fungi in vitro. This chain is Big defensin, found in Branchiostoma belcheri (Amphioxus).